The chain runs to 393 residues: Leucine aminopeptidase 1 (393 aa).

Positions 1–18 (MKLSQVSALAACVPAATA) are cleaved as a signal peptide. The propeptide occupies 19 to 84 (RFVELMEADH…GSQGLRIKES (66 aa)). Asparagine 176 carries N-linked (GlcNAc...) asparagine glycosylation. Zn(2+)-binding residues include histidine 184, aspartate 202, glutamate 241, and aspartate 268. The cysteines at positions 317 and 321 are disulfide-linked. Histidine 350 contributes to the Zn(2+) binding site.

Belongs to the peptidase M28 family. M28E subfamily. In terms of assembly, monomer. Zn(2+) serves as cofactor.

It localises to the secreted. Extracellular aminopeptidase that allows assimilation of proteinaceous substrates. This chain is Leucine aminopeptidase 1 (LAP1), found in Metarhizium robertsii (strain ARSEF 23 / ATCC MYA-3075) (Metarhizium anisopliae (strain ARSEF 23)).